A 487-amino-acid polypeptide reads, in one-letter code: Iron-sulfur cluster assembly SufBD family protein ycf24 (487 aa).

This sequence belongs to the iron-sulfur cluster assembly SufBD family.

It localises to the plastid. The protein resides in the chloroplast. The chain is Iron-sulfur cluster assembly SufBD family protein ycf24 (ycf24) from Pyropia yezoensis (Susabi-nori).